We begin with the raw amino-acid sequence, 77 residues long: Putative defensin-like protein 185 (77 aa).

The first 22 residues, 1–22 (MKNSSILLLLVVFFVISSSGEA), serve as a signal peptide directing secretion. 4 disulfide bridges follow: C25-C77, C31-C54, C40-C71, and C44-C73.

This sequence belongs to the DEFL family.

Its subcellular location is the secreted. The polypeptide is Putative defensin-like protein 185 (LCR39) (Arabidopsis thaliana (Mouse-ear cress)).